Consider the following 156-residue polypeptide: MNINSTLFLQAIVFAILVWFTMKFVWPPITKALDERAQKIADGLAAADKAKSELSSANKRVEAELALSRTETTARLADADRRGQSIVEEAKSKATEEANKIIAAAKVEAEQQSNKAREVLREQVAALAVKGAEQILRKEVNASVHADLLGRLKLEL.

A helical membrane pass occupies residues 7–27 (LFLQAIVFAILVWFTMKFVWP).

Belongs to the ATPase B chain family. F-type ATPases have 2 components, F(1) - the catalytic core - and F(0) - the membrane proton channel. F(1) has five subunits: alpha(3), beta(3), gamma(1), delta(1), epsilon(1). F(0) has three main subunits: a(1), b(2) and c(10-14). The alpha and beta chains form an alternating ring which encloses part of the gamma chain. F(1) is attached to F(0) by a central stalk formed by the gamma and epsilon chains, while a peripheral stalk is formed by the delta and b chains.

It localises to the cell inner membrane. Functionally, f(1)F(0) ATP synthase produces ATP from ADP in the presence of a proton or sodium gradient. F-type ATPases consist of two structural domains, F(1) containing the extramembraneous catalytic core and F(0) containing the membrane proton channel, linked together by a central stalk and a peripheral stalk. During catalysis, ATP synthesis in the catalytic domain of F(1) is coupled via a rotary mechanism of the central stalk subunits to proton translocation. In terms of biological role, component of the F(0) channel, it forms part of the peripheral stalk, linking F(1) to F(0). The sequence is that of ATP synthase subunit b 1 from Albidiferax ferrireducens (strain ATCC BAA-621 / DSM 15236 / T118) (Rhodoferax ferrireducens).